The sequence spans 246 residues: Protein lin-37 homolog (246 aa).

Methionine 1 is modified (N-acetylmethionine). Residues lysine 5 and lysine 7 each participate in a glycyl lysine isopeptide (Lys-Gly) (interchain with G-Cter in SUMO2) cross-link. Residues 39 to 55 (RLDEEAGKTPLDTHNKD) show a composition bias toward basic and acidic residues. 2 disordered regions span residues 39–90 (RLDE…GGPQ) and 129–208 (VRER…TLIY). 2 positions are modified to phosphoserine: serine 135 and serine 138. The residue at position 167 (threonine 167) is a Phosphothreonine. Phosphoserine occurs at positions 182 and 202.

In terms of assembly, component of the DREAM complex (also named LINC complex) at least composed of E2F4, E2F5, LIN9, LIN37, LIN52, LIN54, MYBL1, MYBL2, RBL1, RBL2, RBBP4, TFDP1 and TFDP2. The complex exists in quiescent cells where it represses cell cycle-dependent genes. It dissociates in S phase when LIN9, LIN37, LIN52 and LIN54 form a subcomplex that binds to MYBL2.

The chain is Protein lin-37 homolog (Lin37) from Mus musculus (Mouse).